We begin with the raw amino-acid sequence, 808 residues long: Putative dimethyl sulfoxide reductase chain YnfE (808 aa).

The segment at residues 1–43 (MSKNERMVGISRRTLVKSTAIGSLALAAGGFSLPFTLRNAAAA) is a signal peptide (tat-type signal). A 4Fe-4S Mo/W bis-MGD-type domain is found at 49 to 110 (EKVVWGACSV…SIRRRINHPD (62 aa)). The [4Fe-4S] cluster site is built by C56, C60, C64, and C96. S196 serves as a coordination point for Mo-bis(molybdopterin guanine dinucleotide).

The protein belongs to the prokaryotic molybdopterin-containing oxidoreductase family. [4Fe-4S] cluster is required as a cofactor. It depends on Mo-bis(molybdopterin guanine dinucleotide) as a cofactor. Post-translationally, exported by the Tat system. The position of the signal peptide cleavage has not been experimentally proven.

It localises to the cell membrane. Functionally, terminal reductase during anaerobic growth on various sulfoxide and N-oxide compounds. The protein is Putative dimethyl sulfoxide reductase chain YnfE (ynfE) of Escherichia coli (strain K12).